The chain runs to 686 residues: Envelope glycoprotein H (686 aa).

Residues 1–24 (MPASSVRLPLRLLTLAGLLALAGA) form the signal peptide. Residues 25 to 646 (AALARGAPQG…TSTRLAPVSP (622 aa)) lie on the Virion surface side of the membrane. 5 N-linked (GlcNAc...) asparagine; by host glycosylation sites follow: N77, N162, N542, N604, and N627. Positions 157–217 (PAAVFNVTLG…PPAGRFHVYT (61 aa)) are interaction with gL. A helical membrane pass occupies residues 647-667 (AYVVASVVGAAITVGILYALF). At 668-686 (KMLCSFSSEGYSRLINARS) the chain is on the intravirion side.

This sequence belongs to the herpesviridae glycoprotein H family. Interacts with glycoprotein L (gL); this interaction is necessary for the correct processing and cell surface expression of gH. The heterodimer gH/gL seems to interact with gB trimers during fusion. In terms of processing, N-glycosylated, O-glycosylated, and sialylated.

The protein localises to the virion membrane. The protein resides in the host cell membrane. Its subcellular location is the host endosome membrane. Functionally, the heterodimer glycoprotein H-glycoprotein L is required for the fusion of viral and plasma membranes leading to virus entry into the host cell. Following initial binding to host receptor, membrane fusion is mediated by the fusion machinery composed of gB and the heterodimer gH/gL. May also be involved in the fusion between the virion envelope and the outer nuclear membrane during virion morphogenesis. In Sus scrofa (Pig), this protein is Envelope glycoprotein H.